Reading from the N-terminus, the 249-residue chain is Very-long-chain (3R)-3-hydroxyacyl-CoA dehydratase 1 (249 aa).

Residues 1–22 (MASSEEDGTNGGASEAGEEKEA) are disordered. The Cytoplasmic portion of the chain corresponds to 1–36 (MASSEEDGTNGGASEAGEEKEAPGRRRRLGLLATVW). The helical transmembrane segment at 37 to 56 (LTFYNIAMTAGWLVLAIAMV) threads the bilayer. Topologically, residues 57–75 (RFYMEKGTHKGLYKSIQKT) are lumenal. A helical transmembrane segment spans residues 76 to 92 (LKFFQTFALLEIVHCLI). Residues 93 to 102 (GIVPTSVIVA) are Cytoplasmic-facing. Residues 103-120 (GVQVSSRIFMVWLITHSI) form a helical membrane-spanning segment. The Lumenal portion of the chain corresponds to 121–126 (KPIQNE). The helical transmembrane segment at 127–141 (ESVVLFLVAWTVTEI) threads the bilayer. Residues 142–164 (TRYSFYTFSLLDHLPYFIKWARY) lie on the Cytoplasmic side of the membrane. A helical membrane pass occupies residues 165-182 (NFFIILYPVGVVGELLTI). Residues Y171 and E178 contribute to the active site. Residues 183 to 212 (YAALPYVKKTGMFSIRLPNKYNVSFDYYYF) are Lumenal-facing. N204 carries N-linked (GlcNAc...) asparagine glycosylation. Residues 213-230 (LLITMASYIPLFPQLYFH) traverse the membrane as a helical segment. Over 231–249 (MLRQRRKVLHGEVIVEKDD) the chain is Cytoplasmic.

This sequence belongs to the very long-chain fatty acids dehydratase HACD family. May interact with enzymes of the ELO family (including ELOVL1); with those enzymes that mediate condensation, the first of the four steps of the reaction cycle responsible for fatty acids elongation, may be part of a larger fatty acids elongase complex. Interacts with TECR. In terms of tissue distribution, skeletal muscle.

It localises to the endoplasmic reticulum membrane. It carries out the reaction a very-long-chain (3R)-3-hydroxyacyl-CoA = a very-long-chain (2E)-enoyl-CoA + H2O. It catalyses the reaction (3R)-hydroxyhexadecanoyl-CoA = (2E)-hexadecenoyl-CoA + H2O. The catalysed reaction is (3R)-hydroxyoctadecanoyl-CoA = (2E)-octadecenoyl-CoA + H2O. The enzyme catalyses (3R)-hydroxyeicosanoyl-CoA = (2E)-eicosenoyl-CoA + H2O. It carries out the reaction (3R)-hydroxydocosanoyl-CoA = (2E)-docosenoyl-CoA + H2O. It catalyses the reaction (3R)-hydroxytetracosanoyl-CoA = (2E)-tetracosenoyl-CoA + H2O. The catalysed reaction is (3R)-hydroxyhexacosanoyl-CoA = (2E)-hexacosenoyl-CoA + H2O. It functions in the pathway lipid metabolism; fatty acid biosynthesis. Functionally, catalyzes the third of the four reactions of the long-chain fatty acids elongation cycle. This endoplasmic reticulum-bound enzymatic process, allows the addition of two carbons to the chain of long- and very long-chain fatty acids/VLCFAs per cycle. This enzyme catalyzes the dehydration of the 3-hydroxyacyl-CoA intermediate into trans-2,3-enoyl-CoA, within each cycle of fatty acid elongation. Thereby, it participates in the production of VLCFAs of different chain lengths that are involved in multiple biological processes as precursors of membrane lipids and lipid mediators. The protein is Very-long-chain (3R)-3-hydroxyacyl-CoA dehydratase 1 (HACD1) of Canis lupus familiaris (Dog).